The sequence spans 1600 residues: E3 ubiquitin-protein ligase listerin (1600 aa).

HEAT repeat units lie at residues 31 to 65, 114 to 150, 161 to 202, 245 to 288, 291 to 344, 526 to 606, 853 to 904, 962 to 986, 1045 to 1083, 1289 to 1324, and 1325 to 1369; these read SSVPQDVIVPFKNLLKRDSTTKSKALEEILACVKK, KTLPKLVGPWVAGTFDKDKGVARAALAVSAHILDSDQ, GKLL…SSMA, YQLV…DLLR, ISVT…PDYA, RNYK…AALS, YTTN…DIRT, YASKALTELFQALVSVHGYPAGAKF, LYNVVLLNICLSVYPPAKTPVEQRKLVFALKQFTTWVQT, VDVRSYLLGWHLVFDAYNQAPLQVRKQYTDSLKADN, and SLNA…EEGT. The segment at 1537-1583 adopts an RING-type; degenerate zinc-finger fold; that stretch reads CPICYAVVSADKKLPDKRCSTCNNLFHRLCLYKWFQNSNKNTCPLCR.

It belongs to the LTN1 family. Component of the ribosome quality control complex (RQC), composed of the E3 ubiquitin ligase RKR1/LTN1, RQC1 and RQC2, as well as CDC48 and its ubiquitin-binding cofactors associated with the 60S ribosomal subunits.

It localises to the nucleus. Its subcellular location is the cytoplasm. It is found in the cytosol. It catalyses the reaction S-ubiquitinyl-[E2 ubiquitin-conjugating enzyme]-L-cysteine + [acceptor protein]-L-lysine = [E2 ubiquitin-conjugating enzyme]-L-cysteine + N(6)-ubiquitinyl-[acceptor protein]-L-lysine.. It participates in protein modification; protein ubiquitination. In terms of biological role, E3 ubiquitin-protein ligase component of the ribosome quality control complex (RQC), a ribosome-associated complex that mediates ubiquitination and extraction of incompletely synthesized nascent chains for proteasomal degradation. Mediates ubiquitination of proteins derived from mRNAs lacking stop codons (non-stop proteins) and other translation arrest products induced by poly-lysine sequences and tandem rare codons. Ubiquitination leads to CDC48 recruitment for extraction and degradation of the incomplete translation product. May indirectly play a role in chromatin function and transcription. The protein is E3 ubiquitin-protein ligase listerin (rkr-1) of Neurospora crassa (strain ATCC 24698 / 74-OR23-1A / CBS 708.71 / DSM 1257 / FGSC 987).